Reading from the N-terminus, the 171-residue chain is Pro-corazonin (171 aa).

The signal sequence occupies residues 1–20 (MLHTRTIALLLVGLVVLVNA). Gln21 is modified (pyrrolidone carboxylic acid). The residue at position 31 (Asn31) is an Asparagine amide. Positions 82-171 (FLRNPCDLRV…GFSDHRQKIA (90 aa)) are excised as a propeptide.

The protein belongs to the corazonin family.

Its subcellular location is the secreted. Cardioactive peptide. Corazonin is probably involved in the physiological regulation of the heart beat. The polypeptide is Pro-corazonin (Anopheles gambiae (African malaria mosquito)).